The sequence spans 672 residues: Transcription factor tau 91 kDa subunit (672 aa).

The interval M1–R158 is required for DNA-binding. Residues A6 to A18 constitute a DNA-binding region (a.T hook). 2 disordered regions span residues S24–K45 and V67–P156. Residues D71–L100 are compositionally biased toward acidic residues. Residues L159 to S672 are sufficient for interaction with TFC8. C375 and C383 are joined by a disulfide.

In terms of assembly, heterodimer with TFC8. Component of the TFIIIC complex composed of TFC1, TFC3, TFC4, TFC6, TFC7 and TFC8. The subunits are organized in two globular domains, tauA and tauB, connected by a proteolysis-sensitive and flexible linker. Interacts with TFC1, TFC3, TFC4 and directly with TFC8.

It localises to the nucleus. In terms of biological role, TFIIIC mediates tRNA and 5S RNA gene activation by binding to intragenic promoter elements. Upstream of the transcription start site, TFIIIC assembles the initiation complex TFIIIB-TFIIIC-tDNA, which is sufficient for RNA polymerase III recruitment and function. Part of the tauB domain of TFIIIC that binds boxB DNA promoter sites of tRNA and similar genes. Cooperates with TFC3 in DNA binding. The chain is Transcription factor tau 91 kDa subunit (TFC6) from Saccharomyces cerevisiae (strain ATCC 204508 / S288c) (Baker's yeast).